The primary structure comprises 161 residues: GTP-dependent dephospho-CoA kinase (161 aa).

GTP contacts are provided by Asp-40, Val-41, Val-42, Asp-59, Glu-112, and Glu-135.

Belongs to the GTP-dependent DPCK family.

It carries out the reaction 3'-dephospho-CoA + GTP = GDP + CoA + H(+). It functions in the pathway cofactor biosynthesis; coenzyme A biosynthesis. Catalyzes the GTP-dependent phosphorylation of the 3'-hydroxyl group of dephosphocoenzyme A to form coenzyme A (CoA). This chain is GTP-dependent dephospho-CoA kinase, found in Methanocorpusculum labreanum (strain ATCC 43576 / DSM 4855 / Z).